The primary structure comprises 471 residues: Replication factor C large subunit (471 aa).

44-51 contributes to the ATP binding site; the sequence is GSPGIGKT. Positions 422–431 are enriched in basic and acidic residues; the sequence is RTDAAVDHSE. The tract at residues 422–471 is disordered; the sequence is RTDAAVDHSEGAFAGAVREDNTDEDSAADETTDGDEDTGADSQRGLDEFF. A compositionally biased stretch (acidic residues) spans 442–460; sequence NTDEDSAADETTDGDEDTG.

The protein belongs to the activator 1 small subunits family. RfcL subfamily. As to quaternary structure, heteromultimer composed of small subunits (RfcS) and large subunits (RfcL).

Functionally, part of the RFC clamp loader complex which loads the PCNA sliding clamp onto DNA. The polypeptide is Replication factor C large subunit (Halobacterium salinarum (strain ATCC 29341 / DSM 671 / R1)).